The primary structure comprises 156 residues: Endogenous retrovirus group K member 18 Pro protein (156 aa).

The region spanning leucine 21–leucine 96 is the Peptidase A2 domain. Aspartate 26 is an active-site residue. Residues tyrosine 111–phenylalanine 156 form the G-patch domain.

The protein belongs to the peptidase A2 family. HERV class-II K(HML-2) subfamily. In terms of assembly, active as a homodimer. In terms of processing, autoproteolytically processed at the N-terminus. Expected C-terminal autoprocessing not detected. The sequence shown is that of the processed Pro protein.

The catalysed reaction is Processing at the authentic HIV-1 PR recognition site and release of the mature p17 matrix and the p24 capsid protein, as a result of the cleavage of the -SQNY-|-PIVQ- cleavage site.. Its function is as follows. Retroviral proteases have roles in the processing of the primary translation products and the maturation of the viral particle. Endogenous Pro proteins may have kept, lost or modified their original function during evolution. This Homo sapiens (Human) protein is Endogenous retrovirus group K member 18 Pro protein (ERVK-18).